Reading from the N-terminus, the 731-residue chain is Inclusion body clearance protein IML2 (731 aa).

The tract at residues 1–26 is disordered; that stretch reads MFRVFGSFGSKGNQSSGEEQSTKTKQ. The segment covering 10–26 has biased composition (polar residues); sequence SKGNQSSGEEQSTKTKQ. Residues Ser-265, Ser-268, and Ser-378 each carry the phosphoserine modification. Residue Thr-380 is modified to Phosphothreonine. Phosphoserine occurs at positions 383 and 392.

It belongs to the IML2 family. As to quaternary structure, interacts with lipid droplet proteins PET10 and PDR16.

It is found in the cytoplasm. The protein resides in the nucleus. Functionally, inclusion body (IB) resident protein that interacts strongly with lipid droplet (LD) proteins. Involved in LD-mediated IB clearing after protein folding stress, probably by enabling access to the IBs of an LD-stored soluble sterol derivative that acts as a chaperone in inclusion clearing. This chain is Inclusion body clearance protein IML2, found in Saccharomyces cerevisiae (strain ATCC 204508 / S288c) (Baker's yeast).